The chain runs to 79 residues: ATP synthase subunit c (79 aa).

Transmembrane regions (helical) follow at residues 11 to 31 and 53 to 73; these read MAAA…IGIL and FFIV…LGLY.

This sequence belongs to the ATPase C chain family. In terms of assembly, F-type ATPases have 2 components, F(1) - the catalytic core - and F(0) - the membrane proton channel. F(1) has five subunits: alpha(3), beta(3), gamma(1), delta(1), epsilon(1). F(0) has three main subunits: a(1), b(2) and c(10-14). The alpha and beta chains form an alternating ring which encloses part of the gamma chain. F(1) is attached to F(0) by a central stalk formed by the gamma and epsilon chains, while a peripheral stalk is formed by the delta and b chains.

It is found in the cell inner membrane. Functionally, f(1)F(0) ATP synthase produces ATP from ADP in the presence of a proton or sodium gradient. F-type ATPases consist of two structural domains, F(1) containing the extramembraneous catalytic core and F(0) containing the membrane proton channel, linked together by a central stalk and a peripheral stalk. During catalysis, ATP synthesis in the catalytic domain of F(1) is coupled via a rotary mechanism of the central stalk subunits to proton translocation. In terms of biological role, key component of the F(0) channel; it plays a direct role in translocation across the membrane. A homomeric c-ring of between 10-14 subunits forms the central stalk rotor element with the F(1) delta and epsilon subunits. In Serratia proteamaculans (strain 568), this protein is ATP synthase subunit c.